Here is a 473-residue protein sequence, read N- to C-terminus: Probable ribonuclease FAU-1 (473 aa).

This sequence belongs to the FAU-1 family.

Its function is as follows. Probable RNase involved in rRNA stability through maturation and/or degradation of precursor rRNAs. Binds to RNA in loop regions with AU-rich sequences. The protein is Probable ribonuclease FAU-1 of Hyperthermus butylicus (strain DSM 5456 / JCM 9403 / PLM1-5).